The chain runs to 474 residues: DNA damage checkpoint control protein MEC3 (474 aa).

Residue Ser-452 is modified to Phosphoserine.

This sequence belongs to the MEC3 family. As to quaternary structure, component of the checkpoint clamp complex composed of DDC1, MEC3 and RAD17. The interaction with MEC3 is performed in a RAD17-dependent manner. The checkpoint clamp complex loads onto DNA. Interacts with the DNA polymerase zeta subunit REV7. Also forms a heterotrimer with 2 RAD17 subunits. Interacts with SET1.

It localises to the nucleus. Functionally, component of the checkpoint clamp complex involved in the surveillance mechanism that allows the DNA repair pathways to act to restore the integrity of the DNA prior to DNA synthesis or separation of the replicated chromosomes. Associates with sites of DNA damage and modulates the MEC1 signaling pathway and the activation of RAD53 in response to DNA damage at phase G1. The complex also physically regulates DNA polymerase zeta-dependent mutagenesis by controlling the access of polymerase zeta to damaged DNA. The sequence is that of DNA damage checkpoint control protein MEC3 (MEC3) from Saccharomyces cerevisiae (strain ATCC 204508 / S288c) (Baker's yeast).